We begin with the raw amino-acid sequence, 432 residues long: Adenylosuccinate synthetase 2 (432 aa).

GTP-binding positions include Gly13–Lys19 and Gly41–Thr43. Asp14 (proton acceptor) is an active-site residue. Mg(2+)-binding residues include Asp14 and Gly41. Residues Asp14–Lys17, Asn39–His42, Thr130, Arg144, Gln225, Thr240, and Arg304 each bind IMP. Residue His42 is the Proton donor of the active site. Ala300–Arg306 serves as a coordination point for substrate. GTP is bound by residues Arg306, Lys332–Asp334, and Ser415–Gly417.

This sequence belongs to the adenylosuccinate synthetase family. In terms of assembly, homodimer. Mg(2+) is required as a cofactor.

Its subcellular location is the cytoplasm. The enzyme catalyses IMP + L-aspartate + GTP = N(6)-(1,2-dicarboxyethyl)-AMP + GDP + phosphate + 2 H(+). It functions in the pathway purine metabolism; AMP biosynthesis via de novo pathway; AMP from IMP: step 1/2. Functionally, plays an important role in the de novo pathway of purine nucleotide biosynthesis. Catalyzes the first committed step in the biosynthesis of AMP from IMP. This is Adenylosuccinate synthetase 2 from Photorhabdus laumondii subsp. laumondii (strain DSM 15139 / CIP 105565 / TT01) (Photorhabdus luminescens subsp. laumondii).